A 147-amino-acid polypeptide reads, in one-letter code: Peptide deformylase (147 aa).

The Fe cation site is built by cysteine 88 and histidine 130. The active site involves glutamate 131. Histidine 134 is a binding site for Fe cation.

It belongs to the polypeptide deformylase family. It depends on Fe(2+) as a cofactor.

The catalysed reaction is N-terminal N-formyl-L-methionyl-[peptide] + H2O = N-terminal L-methionyl-[peptide] + formate. Removes the formyl group from the N-terminal Met of newly synthesized proteins. Requires at least a dipeptide for an efficient rate of reaction. N-terminal L-methionine is a prerequisite for activity but the enzyme has broad specificity at other positions. This is Peptide deformylase from Clostridium botulinum (strain Alaska E43 / Type E3).